We begin with the raw amino-acid sequence, 196 residues long: Probable peptidyl-prolyl cis-trans isomerase (196 aa).

The first 26 residues, Met1–Ala26, serve as a signal peptide directing secretion. In terms of domain architecture, PPIase cyclophilin-type spans Pro29 to Asp194.

This sequence belongs to the cyclophilin-type PPIase family.

The protein resides in the periplasm. It carries out the reaction [protein]-peptidylproline (omega=180) = [protein]-peptidylproline (omega=0). In terms of biological role, PPIases accelerate the folding of proteins. It catalyzes the cis-trans isomerization of proline imidic peptide bonds in oligopeptides. The polypeptide is Probable peptidyl-prolyl cis-trans isomerase (ppi) (Brucella melitensis biotype 1 (strain ATCC 23456 / CCUG 17765 / NCTC 10094 / 16M)).